Here is a 273-residue protein sequence, read N- to C-terminus: Dermonecrotic toxin LdSicTox-alphaIB3aiii (273 aa).

His5 is an active-site residue. Residues Glu25 and Asp27 each coordinate Mg(2+). The active-site Nucleophile is His41. 2 disulfides stabilise this stretch: Cys45/Cys51 and Cys47/Cys190. Residue Asp85 participates in Mg(2+) binding.

Belongs to the arthropod phospholipase D family. Class II subfamily. The cofactor is Mg(2+). Expressed by the venom gland.

It is found in the secreted. It catalyses the reaction an N-(acyl)-sphingosylphosphocholine = an N-(acyl)-sphingosyl-1,3-cyclic phosphate + choline. The enzyme catalyses an N-(acyl)-sphingosylphosphoethanolamine = an N-(acyl)-sphingosyl-1,3-cyclic phosphate + ethanolamine. It carries out the reaction a 1-acyl-sn-glycero-3-phosphocholine = a 1-acyl-sn-glycero-2,3-cyclic phosphate + choline. The catalysed reaction is a 1-acyl-sn-glycero-3-phosphoethanolamine = a 1-acyl-sn-glycero-2,3-cyclic phosphate + ethanolamine. Its function is as follows. Dermonecrotic toxins cleave the phosphodiester linkage between the phosphate and headgroup of certain phospholipids (sphingolipid and lysolipid substrates), forming an alcohol (often choline) and a cyclic phosphate. This toxin acts on sphingomyelin (SM). It may also act on ceramide phosphoethanolamine (CPE), lysophosphatidylcholine (LPC) and lysophosphatidylethanolamine (LPE), but not on lysophosphatidylserine (LPS), and lysophosphatidylglycerol (LPG). It acts by transphosphatidylation, releasing exclusively cyclic phosphate products as second products. Induces dermonecrosis, hemolysis, increased vascular permeability, edema, inflammatory response, and platelet aggregation. This is Dermonecrotic toxin LdSicTox-alphaIB3aiii from Loxosceles deserta (Desert recluse spider).